The sequence spans 243 residues: Tryptophan synthase alpha chain (243 aa).

Catalysis depends on proton acceptor residues Glu-31 and Asp-42.

The protein belongs to the TrpA family. As to quaternary structure, tetramer of two alpha and two beta chains.

The catalysed reaction is (1S,2R)-1-C-(indol-3-yl)glycerol 3-phosphate + L-serine = D-glyceraldehyde 3-phosphate + L-tryptophan + H2O. Its pathway is amino-acid biosynthesis; L-tryptophan biosynthesis; L-tryptophan from chorismate: step 5/5. Functionally, the alpha subunit is responsible for the aldol cleavage of indoleglycerol phosphate to indole and glyceraldehyde 3-phosphate. This is Tryptophan synthase alpha chain from Staphylococcus haemolyticus (strain JCSC1435).